A 398-amino-acid chain; its full sequence is Phosphoglycerate kinase (398 aa).

Residues 23–25 (DFN), Arg-38, 61–64 (HMGK), Arg-122, and Arg-155 each bind substrate. ATP is bound by residues Lys-206, Gly-297, Glu-328, and 354 to 357 (GGDS).

Belongs to the phosphoglycerate kinase family. Monomer.

Its subcellular location is the cytoplasm. It carries out the reaction (2R)-3-phosphoglycerate + ATP = (2R)-3-phospho-glyceroyl phosphate + ADP. It participates in carbohydrate degradation; glycolysis; pyruvate from D-glyceraldehyde 3-phosphate: step 2/5. The protein is Phosphoglycerate kinase of Clostridium botulinum (strain Kyoto / Type A2).